A 133-amino-acid polypeptide reads, in one-letter code: ATP synthase epsilon chain, chloroplastic (133 aa).

Belongs to the ATPase epsilon chain family. In terms of assembly, F-type ATPases have 2 components, CF(1) - the catalytic core - and CF(0) - the membrane proton channel. CF(1) has five subunits: alpha(3), beta(3), gamma(1), delta(1), epsilon(1). CF(0) has three main subunits: a, b and c.

It is found in the plastid. Its subcellular location is the chloroplast thylakoid membrane. In terms of biological role, produces ATP from ADP in the presence of a proton gradient across the membrane. The protein is ATP synthase epsilon chain, chloroplastic of Thalassiosira pseudonana (Marine diatom).